The sequence spans 32 residues: MSDINATRLPSFFFPIPCISDDIEMVLTRGER.

Residues 1–10 (MSDINATRLP) constitute a propeptide that is removed on maturation. The segment at residues 11–17 (SFFFPIP) is a cross-link (cyclopeptide (Ser-Pro)). Positions 18 to 32 (CISDDIEMVLTRGER) are excised as a propeptide.

The protein belongs to the MSDIN fungal toxin family. Processed by the macrocyclase-peptidase enzyme POPB to yield a toxic cyclic heptapeptide. POPB first removes 10 residues from the N-terminus. Conformational trapping of the remaining peptide forces the enzyme to release this intermediate rather than proceed to macrocyclization. The enzyme rebinds the remaining peptide in a different conformation and catalyzes macrocyclization of the N-terminal 8 residues.

Its function is as follows. Probable toxin that belongs to the MSDIN-like toxin family responsible for a large number of food poisoning cases and deaths. The sequence is that of MSDIN-like toxin proprotein 3 from Amanita phalloides (Death cap).